The sequence spans 245 residues: MKMKQISDTTLKITMSLEDLMDRGMEIADFLVPQEKTEEFFYAILDELEMPDSFLDTGMLSFRVTPKPDKVDVFVTKSKIDQNLDFEDLSDLPDMEELAQMSPDEFIKTLEKSIADKTKDDIEAIQSLEQVEAKEEEQEQAEQEAESKKEPYIYYILSFAKLADLVAFAKTVTFEMETSELYKMNERYYLTILVDIENHPSPYPAWLLARMREFADDSDISRSVLQEYGQVLMSHDAVLNLQKIG.

This sequence belongs to the MecA family. In terms of assembly, homodimer.

Functionally, enables the recognition and targeting of unfolded and aggregated proteins to the ClpC protease or to other proteins involved in proteolysis. The polypeptide is Adapter protein MecA (Streptococcus pneumoniae (strain Hungary19A-6)).